The sequence spans 397 residues: Phosphoglycerate kinase (397 aa).

Substrate is bound by residues 25–27 (DLN), arginine 41, 64–67 (HLGR), arginine 118, and arginine 151. ATP-binding positions include lysine 202, glutamate 324, and 350–353 (GGDT).

This sequence belongs to the phosphoglycerate kinase family. As to quaternary structure, monomer.

It is found in the cytoplasm. It catalyses the reaction (2R)-3-phosphoglycerate + ATP = (2R)-3-phospho-glyceroyl phosphate + ADP. It participates in carbohydrate degradation; glycolysis; pyruvate from D-glyceraldehyde 3-phosphate: step 2/5. This chain is Phosphoglycerate kinase, found in Herminiimonas arsenicoxydans.